The primary structure comprises 192 residues: MGEAVKDGREEVIQAWYMDDSEEDQRLPHHKDPKEFVSLDKLAELGVLSWRLDADNYETDEDLKKIRESRGYSYMDFCEVCPEKLPNYEVKVKSFFEEHLHTDEEIRYCVAGTGYFDVRDRNEAWIRVLVKKGGMIVLPAGIYHRFTVDSDNYIKAMRLFVGEPVWTPYNRPHDHLPARKEYVDNFMINASA.

Fe(2+) is bound by residues His-99, His-101, Glu-105, and His-144. His-99, His-101, Glu-105, and His-144 together coordinate Ni(2+).

It belongs to the acireductone dioxygenase (ARD) family. Fe(2+) serves as cofactor. Requires Ni(2+) as cofactor.

It is found in the cytoplasm. It localises to the nucleus. It catalyses the reaction 1,2-dihydroxy-5-(methylsulfanyl)pent-1-en-3-one + O2 = 4-methylsulfanyl-2-oxobutanoate + formate + 2 H(+). The enzyme catalyses 1,2-dihydroxy-5-(methylsulfanyl)pent-1-en-3-one + O2 = 3-(methylsulfanyl)propanoate + CO + formate + 2 H(+). It functions in the pathway amino-acid biosynthesis; L-methionine biosynthesis via salvage pathway; L-methionine from S-methyl-5-thio-alpha-D-ribose 1-phosphate: step 5/6. Catalyzes 2 different reactions between oxygen and the acireductone 1,2-dihydroxy-3-keto-5-methylthiopentene (DHK-MTPene) depending upon the metal bound in the active site. Fe-containing acireductone dioxygenase (Fe-ARD) produces formate and 2-keto-4-methylthiobutyrate (KMTB), the alpha-ketoacid precursor of methionine in the methionine recycle pathway. Ni-containing acireductone dioxygenase (Ni-ARD) produces methylthiopropionate, carbon monoxide and formate, and does not lie on the methionine recycle pathway. In Arabidopsis thaliana (Mouse-ear cress), this protein is Acireductone dioxygenase 2 (ARD2).